The sequence spans 952 residues: Aminopeptidase 2, mitochondrial (952 aa).

Residues 1–52 (MPIVRWLLLKSAVRGSSLIGKAHPCLRSIAAHPRYLSNVYSPPAGVSRSLRI) constitute a mitochondrion transit peptide. Residues E228 and 360 to 364 (GAMEN) each bind substrate. N-linked (GlcNAc...) asparagine glycosylation is present at N381. H396 is a Zn(2+) binding site. E397 acts as the Proton acceptor in catalysis. Residues H400 and E419 each contribute to the Zn(2+) site. A glycan (N-linked (GlcNAc...) asparagine) is linked at N713.

Belongs to the peptidase M1 family. Zn(2+) serves as cofactor.

It is found in the periplasm. Its subcellular location is the cytoplasm. It localises to the mitochondrion. Involved in the cellular supply of leucine from externally offered leucine-containing dipeptide substrates. This is Aminopeptidase 2, mitochondrial (APE2) from Saccharomyces cerevisiae (strain ATCC 204508 / S288c) (Baker's yeast).